The chain runs to 339 residues: Cytochrome c biogenesis protein CcsA (339 aa).

Transmembrane regions (helical) follow at residues 6 to 26 (LEHILAHISFFLPFLATLVFW), 37 to 57 (IGSLGNKSIIIAYICITGLLL), 71 to 91 (LYESFMFLSWSFCLIHIVSEI), 97 to 117 (WLGIIIVLIAMLTHGFATVGL), 142 to 162 (MMIPSYATLPCGSLLVIALLI), 247 to 267 (IISLGSLFLTIGILSGAVWVN), and 281 to 299 (TWALITWLLSAIHIHIRMI).

It belongs to the CcmF/CycK/Ccl1/NrfE/CcsA family. May interact with Ccs1.

It localises to the plastid. The protein localises to the chloroplast thylakoid membrane. Required during biogenesis of c-type cytochromes (cytochrome c6 and cytochrome f) at the step of heme attachment. This Anthoceros angustus (Hornwort) protein is Cytochrome c biogenesis protein CcsA.